The sequence spans 287 residues: U-megalopygitoxin(8)-Mo12 (287 aa).

The N-terminal stretch at 1–17 (MNLQYLILSLLSTTVYG) is a signal peptide. The residue at position 284 (H284) is a Histidine amide.

The protein belongs to the megalysin family. Post-translationally, contains 2 disulfide bonds. In terms of tissue distribution, expressed by the venom apparatus.

The protein resides in the secreted. The protein localises to the target cell membrane. Its function is as follows. May function as a large pore-forming protein. This Megalopyge opercularis (Southern flannel moth) protein is U-megalopygitoxin(8)-Mo12.